An 856-amino-acid chain; its full sequence is Envelope glycoprotein gp160 (856 aa).

The signal sequence occupies residues methionine 1 to cysteine 22. Residues lysine 23–tyrosine 670 lie on the Extracellular side of the membrane. The N-linked (GlcNAc...) asparagine; by host glycan is linked to asparagine 37. Cysteines 44 and 57 form a disulfide. Asparagine 70, asparagine 79, asparagine 112, asparagine 116, asparagine 128, asparagine 133, asparagine 142, asparagine 182, asparagine 183, asparagine 196, asparagine 228, asparagine 231, asparagine 238, asparagine 262, asparagine 268, asparagine 279, asparagine 290, asparagine 300, asparagine 355, asparagine 390, asparagine 400, asparagine 440, and asparagine 457 each carry an N-linked (GlcNAc...) asparagine; by host glycan. 5 disulfide bridges follow: cysteine 101/cysteine 204, cysteine 108/cysteine 195, cysteine 113/cysteine 154, cysteine 217/cysteine 247, and cysteine 227/cysteine 239. The interval cysteine 113–aspartate 153 is V1. The tract at residues cysteine 154 to cysteine 195 is V2. Residues cysteine 295–tryptophan 328 are V3. Cysteine 295 and cysteine 329 form a disulfide bridge. Disulfide bonds link cysteine 382–cysteine 439 and cysteine 389–cysteine 412. The segment at cysteine 389–cysteine 412 is V4. The V5 stretch occupies residues glutamine 455–phenylalanine 460. The fusion peptide stretch occupies residues glycine 503–alanine 523. An immunosuppression region spans residues leucine 566–glutamine 582. Residues asparagine 602, asparagine 611, and asparagine 627 are each glycosylated (N-linked (GlcNAc...) asparagine; by host). Residues glutamine 615–glutamine 636 are a coiled coil. Residues lysine 648–glutamine 669 form an MPER; binding to GalCer region. A helical membrane pass occupies residues glycine 671–leucine 691. Topologically, residues serine 692–leucine 856 are cytoplasmic. A YXXV motif; contains endocytosis signal motif is present at residues tyrosine 698–valine 701. The S-palmitoyl cysteine; by host moiety is linked to residue cysteine 764. Residues leucine 855–leucine 856 carry the Di-leucine internalization motif motif.

As to quaternary structure, the mature envelope protein (Env) consists of a homotrimer of non-covalently associated gp120-gp41 heterodimers. The resulting complex protrudes from the virus surface as a spike. There seems to be as few as 10 spikes on the average virion. Interacts with human CD4, CCR5 and CXCR4, to form a P4HB/PDI-CD4-CXCR4-gp120 complex. Gp120 also interacts with the C-type lectins CD209/DC-SIGN and CLEC4M/DC-SIGNR (collectively referred to as DC-SIGN(R)). Gp120 and gp41 interact with GalCer. The mature envelope protein (Env) consists of a homotrimer of non-covalently associated gp120-gp41 heterodimers. The resulting complex protrudes from the virus surface as a spike. There seems to be as few as 10 spikes on the average virion. In terms of processing, specific enzymatic cleavages in vivo yield mature proteins. Envelope glycoproteins are synthesized as an inactive precursor that is heavily N-glycosylated and processed likely by host cell furin in the Golgi to yield the mature SU and TM proteins. The cleavage site between SU and TM requires the minimal sequence [KR]-X-[KR]-R. Palmitoylation of the transmembrane protein and of Env polyprotein (prior to its proteolytic cleavage) is essential for their association with host cell membrane lipid rafts. Palmitoylation is therefore required for envelope trafficking to classical lipid rafts, but not for viral replication.

The protein localises to the virion membrane. The protein resides in the host cell membrane. It localises to the host endosome membrane. Functionally, the surface protein gp120 (SU) attaches the virus to the host lymphoid cell by binding to the primary receptor CD4. This interaction induces a structural rearrangement creating a high affinity binding site for a chemokine coreceptor like CXCR4 and/or CCR5. This peculiar 2 stage receptor-interaction strategy allows gp120 to maintain the highly conserved coreceptor-binding site in a cryptic conformation, protected from neutralizing antibodies. Since CD4 also displays a binding site for the disulfide-isomerase P4HB/PDI, a P4HB/PDI-CD4-CXCR4-gp120 complex may form. In that complex, P4HB/PDI could reach and reduce gp120 disulfide bonds, causing major conformational changes in gp120. TXN, another PDI family member could also be involved in disulfide rearrangements in Env during fusion. These changes are transmitted to the transmembrane protein gp41 and are thought to activate its fusogenic potential by unmasking its fusion peptide. In terms of biological role, the surface protein gp120 is a ligand for CD209/DC-SIGN and CLEC4M/DC-SIGNR, which are respectively found on dendritic cells (DCs), and on endothelial cells of liver sinusoids and lymph node sinuses. These interactions allow capture of viral particles at mucosal surfaces by these cells and subsequent transmission to permissive cells. DCs are professional antigen presenting cells, critical for host immunity by inducing specific immune responses against a broad variety of pathogens. They act as sentinels in various tissues where they take up antigen, process it, and present it to T-cells following migration to lymphoid organs. HIV subverts the migration properties of dendritic cells to gain access to CD4+ T-cells in lymph nodes. Virus transmission to permissive T-cells occurs either in trans (without DCs infection, through viral capture and transmission), or in cis (following DCs productive infection, through the usual CD4-gp120 interaction), thereby inducing a robust infection. In trans infection, bound virions remain infectious over days and it is proposed that they are not degraded, but protected in non-lysosomal acidic organelles within the DCs close to the cell membrane thus contributing to the viral infectious potential during DCs' migration from the periphery to the lymphoid tissues. On arrival at lymphoid tissues, intact virions recycle back to DCs' cell surface allowing virus transmission to CD4+ T-cells. Virion capture also seems to lead to MHC-II-restricted viral antigen presentation, and probably to the activation of HIV-specific CD4+ cells. The transmembrane protein gp41 (TM) acts as a class I viral fusion protein. Under the current model, the protein has at least 3 conformational states: pre-fusion native state, pre-hairpin intermediate state, and post-fusion hairpin state. During fusion of viral and target intracellular membranes, the coiled coil regions (heptad repeats) assume a trimer-of-hairpins structure, positioning the fusion peptide in close proximity to the C-terminal region of the ectodomain. The formation of this structure appears to drive apposition and subsequent fusion of viral and target cell membranes. Complete fusion occurs in host cell endosomes and is dynamin-dependent, however some lipid transfer might occur at the plasma membrane. The virus undergoes clathrin-dependent internalization long before endosomal fusion, thus minimizing the surface exposure of conserved viral epitopes during fusion and reducing the efficacy of inhibitors targeting these epitopes. Membranes fusion leads to delivery of the nucleocapsid into the cytoplasm. Its function is as follows. The envelope glycoprotein gp160 precursor down-modulates cell surface CD4 antigen by interacting with it in the endoplasmic reticulum and blocking its transport to the cell surface. Functionally, the gp120-gp41 heterodimer seems to contribute to T-cell depletion during HIV-1 infection. The envelope glycoproteins expressed on the surface of infected cells induce apoptosis through an interaction with uninfected cells expressing the receptor (CD4) and the coreceptors CXCR4 or CCR5. This type of bystander killing may be obtained by at least three distinct mechanisms. First, the interaction between the 2 cells can induce cellular fusion followed by nuclear fusion within the syncytium. Syncytia are condemned to die from apoptosis. Second, the 2 interacting cells may not fuse entirely and simply exchange plasma membrane lipids, after a sort of hemifusion process, followed by rapid death. Third, it is possible that virus-infected cells, on the point of undergoing apoptosis, fuse with CD4-expressing cells, in which case apoptosis is rapidly transmitted from one cell to the other and thus occurs in a sort of contagious fashion. In terms of biological role, the gp120-gp41 heterodimer allows rapid transcytosis of the virus through CD4 negative cells such as simple epithelial monolayers of the intestinal, rectal and endocervical epithelial barriers. Both gp120 and gp41 specifically recognize glycosphingolipids galactosyl-ceramide (GalCer) or 3' sulfo-galactosyl-ceramide (GalS) present in the lipid rafts structures of epithelial cells. Binding to these alternative receptors allows the rapid transcytosis of the virus through the epithelial cells. This transcytotic vesicle-mediated transport of virions from the apical side to the basolateral side of the epithelial cells does not involve infection of the cells themselves. The sequence is that of Envelope glycoprotein gp160 (env) from Human immunodeficiency virus type 2 subtype A (isolate NIH-Z) (HIV-2).